A 128-amino-acid chain; its full sequence is Small nuclear ribonucleoprotein associated homolog 13 (128 aa).

Belongs to the eukaryotic ribosomal protein eL8 family.

The protein resides in the nucleus. The protein localises to the nucleolus. Its function is as follows. Binds to the 5'-stem-loop of U4 snRNA and may play a role in the late stage of spliceosome assembly. The protein undergoes a conformational change upon RNA-binding. This is Small nuclear ribonucleoprotein associated homolog 13 from Caenorhabditis elegans.